A 435-amino-acid polypeptide reads, in one-letter code: Mitogen-activated protein kinase HOG1 (435 aa).

Thr2 carries the N-acetylthreonine modification. Positions 23–302 (YNDLNPVGMG…AADALAHPYS (280 aa)) constitute a Protein kinase domain. ATP is bound by residues 29–37 (VGMGAFGLV) and Lys52. Asp144 functions as the Proton acceptor in the catalytic mechanism. Residues Cys156 and Cys161 each coordinate arsenite. Thr174 carries the phosphothreonine; by PBS2 modification. The TXY motif lies at 174 to 176 (TGY). Tyr176 is subject to Phosphotyrosine; by PBS2. Cys205 contributes to the arsenite binding site.

It belongs to the protein kinase superfamily. Ser/Thr protein kinase family. MAP kinase subfamily. HOG1 sub-subfamily. As to quaternary structure, interacts with CDC37, HOT1, KIN28, PTP2, PTP3, RBP1, RCK2, RPD3, SIC1, SMP1 and SIN4. Mg(2+) serves as cofactor. Post-translationally, activated by PBS2-mediated concomitant phosphorylation at Thr-174 and Tyr-176. Dually phosphorylated on Thr-174 and Tyr-176, which activates the enzyme.

Its subcellular location is the cytoplasm. It localises to the nucleus. It carries out the reaction L-seryl-[protein] + ATP = O-phospho-L-seryl-[protein] + ADP + H(+). It catalyses the reaction L-threonyl-[protein] + ATP = O-phospho-L-threonyl-[protein] + ADP + H(+). Activated by tyrosine and threonine phosphorylation. Inactivated by dephosphorylation via recruitment of PTC1 to the PBS2-HOG1 complex after adaptation to osmotic stress. PTP2 and PTP3 inactivate HOG1 by dephosphorylating Tyr-176, while the PP2Cs PTC1 and PTC2 or PTC3 dephosphorylate Thr-174 in the activation loop. Its function is as follows. Proline-directed serine/threonine-protein kinase involved in a signal transduction pathway that is activated by changes in the osmolarity of the extracellular environment. Controls osmotic regulation of transcription via the stress response element (STRE) in promoters of target genes. Upon osmotic shock, associates with the SKO1-SSN6-TUP1 complex, phosphorylates SKO1, and converts it into an activator that subsequently recruits Swi/Snf and SAGA complexes. Activates the SMP1 transcription factor and the RCK2 kinase, both also involved in the regulation of the expression of a subset of osmotic stress-related genes. Phosphorylation of HSL1 by HOG1 leads to a G2 arrest essential for cell survival at high osmolarity. Also mediates cell-cycle arrest in G1 phase by the dual targeting of SIC1. Phosphorylates methyltransferase DOT1 at least on 'Ser-565' and 'Thr-576'. Regulates MFA2 ARE-mediated translation in response to carbon source. Targets RPD3 histone deacetylase to osmoresponsive promoters to induce gene expression on stress. Required for the Golgi apparatus localization of MNN1. Plays an essential role in maintaining water homeostasis, arsenite detoxification, copper-resistance, cold-resistance, hydrogen peroxide response, adaptation to citric acid stress, and repression of the mating pathway activity. Functions as an arsenic sensor and effector via direct binding to arsenic and subsequent phosphorylation of the ARR1 transcription factor. The sequence is that of Mitogen-activated protein kinase HOG1 (HOG1) from Saccharomyces cerevisiae (strain ATCC 204508 / S288c) (Baker's yeast).